The following is a 509-amino-acid chain: Photosystem II CP47 reaction center protein (509 aa).

6 helical membrane-spanning segments follow: residues 21–36 (AVHL…WAGS), 101–115 (IILS…IWHW), 140–156 (GIHL…FGAF), 203–218 (IAAG…FHLT), 237–252 (VLSS…AFVT), and 457–472 (NFAL…HGGR).

The protein belongs to the PsbB/PsbC family. PsbB subfamily. PSII is composed of 1 copy each of membrane proteins PsbA, PsbB, PsbC, PsbD, PsbE, PsbF, PsbH, PsbI, PsbJ, PsbK, PsbL, PsbM, PsbT, PsbX, PsbY, PsbZ, Psb30/Ycf12, at least 3 peripheral proteins of the oxygen-evolving complex and a large number of cofactors. It forms dimeric complexes. Binds multiple chlorophylls. PSII binds additional chlorophylls, carotenoids and specific lipids. serves as cofactor.

It is found in the plastid. It localises to the chloroplast thylakoid membrane. Its function is as follows. One of the components of the core complex of photosystem II (PSII). It binds chlorophyll and helps catalyze the primary light-induced photochemical processes of PSII. PSII is a light-driven water:plastoquinone oxidoreductase, using light energy to abstract electrons from H(2)O, generating O(2) and a proton gradient subsequently used for ATP formation. This is Photosystem II CP47 reaction center protein from Trieres chinensis (Marine centric diatom).